The chain runs to 870 residues: MKSPRFRHSQKYIGSKPYYGYYENDHYIVSWCRGHLLELKNPEEMDPKYKLFQLEHLPLIFQPSYKVIQENAEQLQILVKLLQRPDVDHAVNICDADREGELIYREVYEYAGVNKKQSRVYKSSFEAAELEAALNRLESASKYDGLAYSAKARQYLDYLLGMNITRGCTTKLAQNKFLLSSGRVQMCLLHEIRQRELAIENYREQSYYHLQLITDLGLKPVMKTEDQVLNPSPLKSLGENLKDQYLTVEDFKEGTRKQNPKLLYNLTDLYKDAHAQLQINAETAKKHIQNLYEEGFITYPRSSSRHLPTEQVDRVKGVMQALAKSRYSLLVQSVDIDAIDIKHKTFDDDLVSSHFAIIPTTKQYQEEGRPEIEKQLYSLVVKRFVGNFMRPAVYLVRDVSLIDAMGNTYQIKESVLREKGFLEVFQEEVKEESVETFKVPILQKGQELQIYDFELQESKTKKPALHTESSILTFMETAGRKIDDEHLKELMKGKRIGTVATEAAFIPVLHEKNFIDIEKGKIITTPIGRAFIEQFPVQQIKDPLYTAEMEGMIHRIEKNEMSYENFIAQTNAFVQKITQEIIRIPDTVSYNLIETWKKQIEVCQCPCGNGIILDRGKFFGCSNHPNCNKGLPKRVKEKTIPTAQVKKLFEENKTDIIKGFKSNGKEFSAYLAFVNGEVSFNLPSVEELSLGQCPKCQKGKILNRKTFFGCSEYQNGCDFMLPAKIKGKKLSDSQIKKLVNNHVTDFINGFSGEKGEFTAAIRLKTDLSICFEFPTTDDRTVGKCPLCQSRVIIGKTNYLCEQYKRGCDFIVSGMILEKRITASQIKKLLEKNMTDTVKGFVSKKTGKSFDAKLTYDSTQKRVTFIYEKKK.

The Toprim domain maps to 1 to 128; sequence MKSPRFRHSQ…RVYKSSFEAA (128 aa). Residues 143–578 form the Topo IA-type catalytic domain; sequence YDGLAYSAKA…QTNAFVQKIT (436 aa). The interaction with DNA stretch occupies residues 180-185; that stretch reads SSGRVQ. The O-(5'-phospho-DNA)-tyrosine intermediate role is filled by Y299. C4-type zinc fingers lie at residues 603 to 627, 693 to 717, and 784 to 807; these read CQCPCGNGIILDRGKFFGCSNHPNC, CPKCQKGKILNRKTFFGCSEYQNGC, and CPLCQSRVIIGKTNYLCEQYKRGC.

This sequence belongs to the type IA topoisomerase family. As to quaternary structure, monomer.

It carries out the reaction ATP-independent breakage of single-stranded DNA, followed by passage and rejoining.. Releases the supercoiling and torsional tension of DNA, which is introduced during the DNA replication and transcription, by transiently cleaving and rejoining one strand of the DNA duplex. Introduces a single-strand break via transesterification at a target site in duplex DNA. The scissile phosphodiester is attacked by the catalytic tyrosine of the enzyme, resulting in the formation of a DNA-(5'-phosphotyrosyl)-enzyme intermediate and the expulsion of a 3'-OH DNA strand. The free DNA strand then undergoes passage around the unbroken strand, thus removing DNA supercoils. Finally, in the religation step, the DNA 3'-OH attacks the covalent intermediate to expel the active-site tyrosine and restore the DNA phosphodiester backbone. In Bacillus anthracis, this protein is DNA topoisomerase 1 (topX).